The chain runs to 135 residues: uncharacterized protein (135 aa).

A Response regulatory domain is found at 13–129 (QVLIAENSRF…KILEKVNAAI (117 aa)). Aspartate 64 carries the post-translational modification 4-aspartylphosphate.

This is an uncharacterized protein from Leptospira interrogans serogroup Icterohaemorrhagiae serovar copenhageni (strain Fiocruz L1-130).